The chain runs to 294 residues: Cell division control protein 2 homolog 2 (294 aa).

A Protein kinase domain is found at 4–287 (YEKVEKIGEG…ARGALEHEYF (284 aa)). ATP is bound by residues 10–18 (IGEGTYGVV) and Lys33. Residue Thr14 is modified to Phosphothreonine. Tyr15 is subject to Phosphotyrosine. Catalysis depends on Asp127, which acts as the Proton acceptor. Thr161 is modified (phosphothreonine; by CAK).

The protein belongs to the protein kinase superfamily. CMGC Ser/Thr protein kinase family. CDC2/CDKX subfamily. As to expression, found in most organs including root, young leaf, stem, vegetative meristem and flower bud.

The catalysed reaction is L-seryl-[protein] + ATP = O-phospho-L-seryl-[protein] + ADP + H(+). The enzyme catalyses L-threonyl-[protein] + ATP = O-phospho-L-threonyl-[protein] + ADP + H(+). With respect to regulation, phosphorylation at Thr-14 or Tyr-15 inactivates the enzyme, while phosphorylation at Thr-161 activates it. In terms of biological role, plays a key role in the control of the eukaryotic cell cycle. Component of the kinase complex that phosphorylates the repetitive C-terminus of RNA polymerase II. The polypeptide is Cell division control protein 2 homolog 2 (CDC2B) (Medicago sativa (Alfalfa)).